The following is a 347-amino-acid chain: Phosphate acyltransferase (347 aa).

This sequence belongs to the PlsX family. In terms of assembly, homodimer. Probably interacts with PlsY.

The protein localises to the cytoplasm. The enzyme catalyses a fatty acyl-[ACP] + phosphate = an acyl phosphate + holo-[ACP]. Its pathway is lipid metabolism; phospholipid metabolism. Catalyzes the reversible formation of acyl-phosphate (acyl-PO(4)) from acyl-[acyl-carrier-protein] (acyl-ACP). This enzyme utilizes acyl-ACP as fatty acyl donor, but not acyl-CoA. This Pediococcus pentosaceus (strain ATCC 25745 / CCUG 21536 / LMG 10740 / 183-1w) protein is Phosphate acyltransferase.